A 280-amino-acid polypeptide reads, in one-letter code: Probable endonuclease 4 (280 aa).

Zn(2+)-binding residues include histidine 69, histidine 109, glutamate 145, aspartate 179, histidine 182, histidine 216, aspartate 229, histidine 231, and glutamate 261.

It belongs to the AP endonuclease 2 family. Zn(2+) is required as a cofactor.

The catalysed reaction is Endonucleolytic cleavage to 5'-phosphooligonucleotide end-products.. Endonuclease IV plays a role in DNA repair. It cleaves phosphodiester bonds at apurinic or apyrimidinic (AP) sites, generating a 3'-hydroxyl group and a 5'-terminal sugar phosphate. The polypeptide is Probable endonuclease 4 (Photorhabdus laumondii subsp. laumondii (strain DSM 15139 / CIP 105565 / TT01) (Photorhabdus luminescens subsp. laumondii)).